The chain runs to 415 residues: Prostacyclin receptor (415 aa).

The interval 1–21 is disordered; the sequence is MMASDGHPGPPSVTPGSPLSA. Residues 1-44 lie on the Extracellular side of the membrane; sequence MMASDGHPGPPSVTPGSPLSAGGREWQGMAGSCWNITYVQDSVG. Intrachain disulfides connect Cys33–Cys193 and Cys120–Cys198. Residue Asn35 is glycosylated (N-linked (GlcNAc...) asparagine). The chain crosses the membrane as a helical span at residues 45–66; sequence PATSTLMFVAGVVGNGLALGIL. Over 67–79 the chain is Cytoplasmic; it reads GARRRSHPSAFAV. The helical transmembrane segment at 80–104 threads the bilayer; sequence LVTGLAVTDLLGTCFLSPAVFVAYA. Over 105–122 the chain is Extracellular; the sequence is RNSSLLGLAHGGTMLCDT. Residues 123–143 traverse the membrane as a helical segment; it reads FAFAMTFFGLASTLILFAMAV. Topologically, residues 144–162 are cytoplasmic; it reads ERCLALSHPYLYAQLDGPR. A helical membrane pass occupies residues 163–186; sequence CARFALPSIYAFCCLFCSLPLLGL. Residues 187 to 215 are Extracellular-facing; the sequence is GEHQQYCPGSWCFIRMRSAQPGGCAFSLA. The helical transmembrane segment at 216 to 236 threads the bilayer; the sequence is YASLMALLVTSIFFCNGSVTL. The Cytoplasmic segment spans residues 237–263; sequence SLYHMYRQQRRHHGSFVPTSRAREDEV. The helical transmembrane segment at 264–288 threads the bilayer; it reads YHLILLALMTVIMAVCSLPLMIRGF. The Extracellular segment spans residues 289 to 301; that stretch reads TQAIAPDSREMGD. Residues 302–322 traverse the membrane as a helical segment; that stretch reads LLAFRFNAFNPILDPWVFILF. Topologically, residues 323–415 are cytoplasmic; it reads RKAVFQRLKF…SEAIAACSLC (93 aa). Residues 349–370 form a disordered region; sequence PLSRPASGRRDPPAPTSLQAKE. Ser365 carries the phosphoserine modification. Position 412 is a cysteine methyl ester (Cys412). The S-farnesyl cysteine moiety is linked to residue Cys412. The propeptide at 413-415 is removed in mature form; sequence SLC.

The protein belongs to the G-protein coupled receptor 1 family. As to quaternary structure, interacts (non-isoprenylated C-terminus) with PDZK1. Isoprenylation does not influence ligand binding but is required for efficient coupling to the effectors adenylyl cyclase and phospholipase C.

It is found in the cell membrane. Functionally, receptor for prostacyclin (prostaglandin I2 or PGI2). The activity of this receptor is mediated by G(s) proteins which activate adenylate cyclase. In Mus musculus (Mouse), this protein is Prostacyclin receptor (Ptgir).